The primary structure comprises 412 residues: uncharacterized protein (412 aa).

Tandem repeats lie at residues 112–116 (GSIRS), 117–121 (GSIRS), 122–126 (GSIRD), 127–131 (GSIRD), 132–136 (GSIRS), 137–141 (GNIRD), and 142–146 (GSVRS). The segment at 112 to 146 (GSIRSGSIRSGSIRDGSIRDGSIRSGNIRDGSVRS) is 7 X 5 AA tandem repeats of G-[NS]-[IV]-R-[DS]. The segment covering 116 to 126 (SGSIRSGSIRD) has biased composition (low complexity). The segment at 116-209 (SGSIRSGSIR…SEKSIKPSTK (94 aa)) is disordered. Over residues 192–209 (NHYAESEYSEKSIKPSTK) the composition is skewed to basic and acidic residues.

It belongs to the asfivirus B407L family.

This is an uncharacterized protein from Ornithodoros (relapsing fever ticks).